A 256-amino-acid polypeptide reads, in one-letter code: uncharacterized protein (256 aa).

The protein belongs to the glycosyltransferase 2 family.

This is an uncharacterized protein from Acanthamoeba polyphaga mimivirus (APMV).